A 225-amino-acid chain; its full sequence is Probable septum site-determining protein MinC (225 aa).

It belongs to the MinC family. In terms of assembly, interacts with MinD and FtsZ.

Cell division inhibitor that blocks the formation of polar Z ring septums. Rapidly oscillates between the poles of the cell to destabilize FtsZ filaments that have formed before they mature into polar Z rings. Prevents FtsZ polymerization. The sequence is that of Probable septum site-determining protein MinC from Listeria monocytogenes serotype 4a (strain HCC23).